The chain runs to 630 residues: CREB-regulated transcription coactivator 1 (630 aa).

2 positions are modified to phosphoserine: serine 64 and serine 113. Disordered regions lie at residues 142-174 (ADTSWRRTNSDSALHQSTMTPTQAESFTGGPQD), 187-221 (GMEETGSETDKTLSKQSWDSKKAGSRPKSCEVPGI), 256-331 (SPLP…LSPL), and 356-475 (QAGS…HTST). Threonine 149 carries the phosphothreonine modification. Serine 151 carries the phosphoserine; by SIK1 and SIK2 modification. Residues 151–167 (SDSALHQSTMTPTQAES) show a composition bias toward polar residues. A Phosphothreonine modification is found at threonine 161. Positions 194 to 208 (ETDKTLSKQSWDSKK) are enriched in basic and acidic residues. The Nuclear export signal motif lies at 242–258 (TGGSLPDLSTIHFPSPL). Positions 256-270 (SPLPTPLDPEEPPFP) are enriched in pro residues. Composition is skewed to polar residues over residues 292 to 301 (GMNTPSSSPQ) and 310 to 331 (LSLSTEARRQQAQQVPPTLSPL). Pro residues predominate over residues 361–384 (QPPPQPQPPPPPPPVSQQQPPPPQ). A compositionally biased stretch (low complexity) spans 385–394 (VSVGLPQGGP). Polar residues-rich tracts occupy residues 414–426 (VPSTLPQSPTESP) and 450–475 (PATQSPTSPVSNQGFSPGSSPQHTST).

The protein belongs to the TORC family. In terms of assembly, binds, as a tetramer, through its N-terminal region, with the bZIP domain of CREB1. 'Arg-314' in the bZIP domain of CREB1 is essential for this interaction. Interaction, via its C-terminal, with TAF4, enhances recruitment of TAF4 to CREB1. Interacts with 14-3-3 proteins, including YWHAE/14-3-3 epsilon. Interacts with calmodulin-dependent catalytic subunit PPP3CA/calcineurin A. Post-translationally, phosphorylation/dephosphorylation states of Ser-151 are required for regulating transduction of CREB activity. TORCs are inactive when phosphorylated, and active when dephosphorylated at this site. This primary site of phosphorylation is mediated by SIKs (SIK1 and SIK2), is regulated by cAMP and calcium levels and is dependent on the phosphorylation of SIKs by LKB1. As to expression, highly expressed in developing cortical neurons, peaking during dendrite development.

It is found in the cytoplasm. The protein resides in the nucleus. Functionally, transcriptional coactivator for CREB1 which activates transcription through both consensus and variant cAMP response element (CRE) sites. Acts as a coactivator, in the SIK/TORC signaling pathway, being active when dephosphorylated and acts independently of CREB1 'Ser-133' phosphorylation. Enhances the interaction of CREB1 with TAF4. Regulates the expression of specific CREB-activated genes such as the steroidogenic gene, StAR. Potent coactivator of PGC1alpha and inducer of mitochondrial biogenesis in muscle cells. In the hippocampus, involved in late-phase long-term potentiation (L-LTP) maintenance at the Schaffer collateral-CA1 synapses. May be required for dendritic growth of developing cortical neurons. In concert with SIK1, regulates the light-induced entrainment of the circadian clock. In response to light stimulus, coactivates the CREB-mediated transcription of PER1 which plays an important role in the photic entrainment of the circadian clock. The polypeptide is CREB-regulated transcription coactivator 1 (Crtc1) (Rattus norvegicus (Rat)).